The chain runs to 565 residues: Sulfite reductase [NADPH] hemoprotein beta-component (565 aa).

[4Fe-4S] cluster contacts are provided by Cys-429, Cys-435, Cys-474, and Cys-478. Cys-478 serves as a coordination point for siroheme.

The protein belongs to the nitrite and sulfite reductase 4Fe-4S domain family. In terms of assembly, alpha(8)-beta(8). The alpha component is a flavoprotein, the beta component is a hemoprotein. The cofactor is siroheme. [4Fe-4S] cluster is required as a cofactor.

The enzyme catalyses hydrogen sulfide + 3 NADP(+) + 3 H2O = sulfite + 3 NADPH + 4 H(+). It functions in the pathway sulfur metabolism; hydrogen sulfide biosynthesis; hydrogen sulfide from sulfite (NADPH route): step 1/1. In terms of biological role, component of the sulfite reductase complex that catalyzes the 6-electron reduction of sulfite to sulfide. This is one of several activities required for the biosynthesis of L-cysteine from sulfate. This chain is Sulfite reductase [NADPH] hemoprotein beta-component, found in Shewanella baltica (strain OS223).